Reading from the N-terminus, the 210-residue chain is TM2 domain-containing protein C02F5.13 (210 aa).

The first 18 residues, 1-18, serve as a signal peptide directing secretion; it reads MRRLPWLIPFFLVNISNG. Residues 19 to 138 lie on the Extracellular side of the membrane; that stretch reads NNEFRIEFEY…PRTFTKSTPC (120 aa). The N-linked (GlcNAc...) asparagine glycan is linked to Asn91. A helical membrane pass occupies residues 139-159; the sequence is IIYNGHYFLTTLLYSIFLGVV. Residues 143 to 191 enclose the TM2 domain; sequence GHYFLTTLLYSIFLGVVAVDRFCLGYSAMAVGKLMTLGGFGIWWIVDIF. Over 160–178 the chain is Cytoplasmic; it reads AVDRFCLGYSAMAVGKLMT. Residues 179–199 form a helical membrane-spanning segment; sequence LGGFGIWWIVDIFLLVLGVLG. Residues 200–210 are Extracellular-facing; that stretch reads PADDSSWEPYY.

This sequence belongs to the TM2 family.

The protein resides in the membrane. This chain is TM2 domain-containing protein C02F5.13, found in Caenorhabditis elegans.